The primary structure comprises 91 residues: Large ribosomal subunit protein bL27 (91 aa).

The tract at residues 1–24 (MAHKKGVGSSRNGRDSNPKMRGVK) is disordered.

The protein belongs to the bacterial ribosomal protein bL27 family.

The sequence is that of Large ribosomal subunit protein bL27 from Chloroflexus aggregans (strain MD-66 / DSM 9485).